Here is a 490-residue protein sequence, read N- to C-terminus: tRNA modification GTPase MnmE (490 aa).

3 residues coordinate (6S)-5-formyl-5,6,7,8-tetrahydrofolate: Arg23, Glu80, and Lys133. The TrmE-type G domain occupies 229–412 (GIEVVIAGQP…LRRILLEVAG (184 aa)). Position 239 (Asn239) interacts with K(+). GTP is bound by residues 239–244 (NAGKSS), 258–264 (TPVAGTT), and 283–286 (DTAG). Ser243 contacts Mg(2+). Residues Thr258, Val260, and Thr263 each coordinate K(+). Thr264 lines the Mg(2+) pocket. Positions 366 to 382 (PTAPTESAAVPPASARP) are enriched in low complexity. A disordered region spans residues 366–388 (PTAPTESAAVPPASARPAPAPRP). 393 to 395 (SAR) is a binding site for GTP. A (6S)-5-formyl-5,6,7,8-tetrahydrofolate-binding site is contributed by Lys490.

It belongs to the TRAFAC class TrmE-Era-EngA-EngB-Septin-like GTPase superfamily. TrmE GTPase family. As to quaternary structure, homodimer. Heterotetramer of two MnmE and two MnmG subunits. Requires K(+) as cofactor.

It localises to the cytoplasm. Functionally, exhibits a very high intrinsic GTPase hydrolysis rate. Involved in the addition of a carboxymethylaminomethyl (cmnm) group at the wobble position (U34) of certain tRNAs, forming tRNA-cmnm(5)s(2)U34. This chain is tRNA modification GTPase MnmE, found in Verminephrobacter eiseniae (strain EF01-2).